Reading from the N-terminus, the 118-residue chain is Large ribosomal subunit protein uL24 (118 aa).

It belongs to the universal ribosomal protein uL24 family. As to quaternary structure, part of the 50S ribosomal subunit.

In terms of biological role, one of two assembly initiator proteins, it binds directly to the 5'-end of the 23S rRNA, where it nucleates assembly of the 50S subunit. Functionally, one of the proteins that surrounds the polypeptide exit tunnel on the outside of the subunit. The protein is Large ribosomal subunit protein uL24 of Prochlorococcus marinus (strain NATL2A).